The sequence spans 142 residues: Transcriptional regulator MraZ (142 aa).

SpoVT-AbrB domains lie at Glu-5 to Glu-47 and Ala-76 to Lys-119.

It belongs to the MraZ family. In terms of assembly, forms oligomers.

Its subcellular location is the cytoplasm. The protein localises to the nucleoid. In Clostridium beijerinckii (strain ATCC 51743 / NCIMB 8052) (Clostridium acetobutylicum), this protein is Transcriptional regulator MraZ.